The chain runs to 449 residues: L-seryl-tRNA(Sec) selenium transferase (449 aa).

N6-(pyridoxal phosphate)lysine is present on lysine 286.

It belongs to the SelA family. Requires pyridoxal 5'-phosphate as cofactor.

The protein localises to the cytoplasm. It carries out the reaction L-seryl-tRNA(Sec) + selenophosphate + H(+) = L-selenocysteinyl-tRNA(Sec) + phosphate. The protein operates within aminoacyl-tRNA biosynthesis; selenocysteinyl-tRNA(Sec) biosynthesis; selenocysteinyl-tRNA(Sec) from L-seryl-tRNA(Sec) (bacterial route): step 1/1. In terms of biological role, converts seryl-tRNA(Sec) to selenocysteinyl-tRNA(Sec) required for selenoprotein biosynthesis. The polypeptide is L-seryl-tRNA(Sec) selenium transferase (Sulfurimonas denitrificans (strain ATCC 33889 / DSM 1251) (Thiomicrospira denitrificans (strain ATCC 33889 / DSM 1251))).